The chain runs to 292 residues: Ribosomal RNA small subunit methyltransferase A (292 aa).

S-adenosyl-L-methionine is bound by residues asparagine 29, leucine 31, glycine 56, glutamate 77, aspartate 102, and asparagine 127.

This sequence belongs to the class I-like SAM-binding methyltransferase superfamily. rRNA adenine N(6)-methyltransferase family. RsmA subfamily.

The protein resides in the cytoplasm. The enzyme catalyses adenosine(1518)/adenosine(1519) in 16S rRNA + 4 S-adenosyl-L-methionine = N(6)-dimethyladenosine(1518)/N(6)-dimethyladenosine(1519) in 16S rRNA + 4 S-adenosyl-L-homocysteine + 4 H(+). Functionally, specifically dimethylates two adjacent adenosines (A1518 and A1519) in the loop of a conserved hairpin near the 3'-end of 16S rRNA in the 30S particle. May play a critical role in biogenesis of 30S subunits. The chain is Ribosomal RNA small subunit methyltransferase A from Bacillus licheniformis (strain ATCC 14580 / DSM 13 / JCM 2505 / CCUG 7422 / NBRC 12200 / NCIMB 9375 / NCTC 10341 / NRRL NRS-1264 / Gibson 46).